A 348-amino-acid chain; its full sequence is Lysophosphatidic acid receptor 2 (348 aa).

At methionine 1 to valine 30 the chain is on the extracellular side. 2 N-linked (GlcNAc...) asparagine glycosylation sites follow: asparagine 7 and asparagine 15. A helical membrane pass occupies residues valine 31–isoleucine 51. Over alanine 52–tyrosine 66 the chain is Cytoplasmic. The helical transmembrane segment at leucine 67–phenylalanine 87 threads the bilayer. Residues histidine 88–glycine 100 are Extracellular-facing. The chain crosses the membrane as a helical span at residues tryptophan 101 to alanine 123. The Cytoplasmic portion of the chain corresponds to valine 124–arginine 143. The helical transmembrane segment at valine 144–histidine 164 threads the bilayer. The Extracellular portion of the chain corresponds to serine 165–serine 185. A helical membrane pass occupies residues tyrosine 186–threonine 206. Residues arginine 207–threonine 239 are Cytoplasmic-facing. Residues valine 240–leucine 260 form a helical membrane-spanning segment. Residues aspartate 261–tyrosine 276 are Extracellular-facing. A helical membrane pass occupies residues phenylalanine 277–cysteine 294. Residues arginine 295–leucine 348 lie on the Cytoplasmic side of the membrane. A lipid anchor (S-palmitoyl cysteine) is attached at cysteine 308. The PDZ-binding signature appears at aspartate 345 to leucine 348.

It belongs to the G-protein coupled receptor 1 family. In terms of assembly, interacts with SLC9A3R2/NHERF2, MAGI3 and PLCB3. Interacts with RALA and GRK2. In terms of tissue distribution, expressed most abundantly in testes and peripheral blood leukocytes with less expression in pancreas, spleen, thymus and prostate. Little or no expression in heart, brain, placenta, lung, liver, skeletal muscle, kidney, ovary, small intestine, or colon.

Its subcellular location is the cell surface. It localises to the cell membrane. In terms of biological role, receptor for lysophosphatidic acid (LPA), a mediator of diverse cellular activities. Seems to be coupled to the G(i)/G(o), G(12)/G(13), and G(q) families of heteromeric G proteins. Plays a key role in phospholipase C-beta (PLC-beta) signaling pathway. Stimulates phospholipase C (PLC) activity in a manner that is independent of RALA activation. The polypeptide is Lysophosphatidic acid receptor 2 (Homo sapiens (Human)).